The primary structure comprises 330 residues: Probable xanthine dehydrogenase subunit A (330 aa).

In terms of assembly, could be composed of four subunits: PucA, PucC, PucD and PucE.

The enzyme catalyses xanthine + NAD(+) + H2O = urate + NADH + H(+). The catalysed reaction is hypoxanthine + NAD(+) + H2O = xanthine + NADH + H(+). It functions in the pathway purine metabolism; hypoxanthine degradation; urate from hypoxanthine: step 1/2. The protein operates within purine metabolism; hypoxanthine degradation; urate from hypoxanthine: step 2/2. Its function is as follows. Oxidizes hypoxanthine and xanthine to uric acid. PucA subunit could exert a molybdenum cofactor recruiting function. This chain is Probable xanthine dehydrogenase subunit A (pucA), found in Bacillus subtilis (strain 168).